The following is a 166-amino-acid chain: Phosphopantetheine adenylyltransferase (166 aa).

Threonine 10 is a substrate binding site. Residues 10 to 11 (TF) and histidine 18 each bind ATP. Substrate contacts are provided by lysine 42, leucine 75, and arginine 89. Residues 90–92 (GVR), glutamate 100, and 125–131 (YTYVAST) contribute to the ATP site.

It belongs to the bacterial CoaD family. As to quaternary structure, homohexamer. Mg(2+) is required as a cofactor.

It is found in the cytoplasm. It carries out the reaction (R)-4'-phosphopantetheine + ATP + H(+) = 3'-dephospho-CoA + diphosphate. It participates in cofactor biosynthesis; coenzyme A biosynthesis; CoA from (R)-pantothenate: step 4/5. Its function is as follows. Reversibly transfers an adenylyl group from ATP to 4'-phosphopantetheine, yielding dephospho-CoA (dPCoA) and pyrophosphate. The chain is Phosphopantetheine adenylyltransferase from Chlorobaculum parvum (strain DSM 263 / NCIMB 8327) (Chlorobium vibrioforme subsp. thiosulfatophilum).